The sequence spans 316 residues: UDP-N-acetylenolpyruvoylglucosamine reductase (316 aa).

In terms of domain architecture, FAD-binding PCMH-type spans 30-194 (VGGEADYLVF…LSVKFALAPG (165 aa)). Residue R173 is part of the active site. S223 acts as the Proton donor in catalysis. E293 is an active-site residue.

The protein belongs to the MurB family. FAD serves as cofactor.

The protein resides in the cytoplasm. It catalyses the reaction UDP-N-acetyl-alpha-D-muramate + NADP(+) = UDP-N-acetyl-3-O-(1-carboxyvinyl)-alpha-D-glucosamine + NADPH + H(+). It functions in the pathway cell wall biogenesis; peptidoglycan biosynthesis. Cell wall formation. The protein is UDP-N-acetylenolpyruvoylglucosamine reductase of Streptococcus pneumoniae serotype 2 (strain D39 / NCTC 7466).